A 380-amino-acid chain; its full sequence is Mitogen-activated protein kinase 3 (380 aa).

Position 2 is an N-acetylalanine (A2). The Protein kinase domain occupies 43–331; it reads YTQLQYIGEG…VEEALAHPYL (289 aa). ATP-binding positions include 49 to 57 and K72; that span reads IGEGAYGMV. Residue D167 is the Proton acceptor of the active site. T199 is modified (phosphothreonine). At T203 the chain carries Phosphothreonine; by MAP2K1 and MAP2K2. Positions 203-205 match the TXY motif; it reads TEY. Y205 bears the Phosphotyrosine; by MAP2K1 and MAP2K2 mark. Phosphothreonine; by autocatalysis is present on T208.

Belongs to the protein kinase superfamily. CMGC Ser/Thr protein kinase family. MAP kinase subfamily. Binds both upstream activators and downstream substrates in multimolecular complexes. Found in a complex with at least BRAF, HRAS, MAP2K1/MEK1, MAPK3 and RGS14. Interacts with ADAM15, ARRB2, CANX, DAPK1 (via death domain), HSF4, IER3, MAP2K1/MEK1, MORG1, NISCH, PEA15, SGK1 and MKNK2. MKNK2 isoform 1 binding prevents from dephosphorylation and inactivation. Interacts with TPR. Interacts with HSF1 (via D domain and preferentially with hyperphosphorylated form); this interaction occurs upon heat shock. Interacts with CDKN2AIP. Interacts with CAVIN4. Interacts with GIT1; this interaction is necessary for MAPK3 localization to focal adhesions. Interacts with ZNF263. Interacts with EBF4. Mg(2+) is required as a cofactor. In terms of processing, phosphorylated upon FLT3 and KIT signaling. Ligand-activated ALK induces tyrosine phosphorylation. Dephosphorylated by PTPRJ at Tyr-205. Dually phosphorylated on Thr-203 and Tyr-205, which activates the enzyme. Post-translationally, ubiquitinated by TRIM15 via 'Lys-63'-linked ubiquitination; leading to activation. Deubiquitinated by CYLD. In terms of tissue distribution, highest levels within the nervous system, expressed in different tissues, mostly in intestine, placenta and lung.

Its subcellular location is the cytoplasm. The protein resides in the nucleus. It localises to the membrane. It is found in the caveola. The protein localises to the cell junction. Its subcellular location is the focal adhesion. It catalyses the reaction L-seryl-[protein] + ATP = O-phospho-L-seryl-[protein] + ADP + H(+). The enzyme catalyses L-threonyl-[protein] + ATP = O-phospho-L-threonyl-[protein] + ADP + H(+). Phosphorylated by MAP2K1/MEK1 and MAP2K2/MEK2 on Thr-203 and Tyr-205 in response to external stimuli like insulin or NGF. Both phosphorylations are required for activity. This phosphorylation causes dramatic conformational changes, which enable full activation and interaction of MAPK1/ERK2 with its substrates. Dephosphorylated and inactivated by DUSP3, DUSP6 and DUSP9. Serine/threonine kinase which acts as an essential component of the MAP kinase signal transduction pathway. MAPK1/ERK2 and MAPK3/ERK1 are the 2 MAPKs which play an important role in the MAPK/ERK cascade. They participate also in a signaling cascade initiated by activated KIT and KITLG/SCF. Depending on the cellular context, the MAPK/ERK cascade mediates diverse biological functions such as cell growth, adhesion, survival and differentiation through the regulation of transcription, translation, cytoskeletal rearrangements. The MAPK/ERK cascade also plays a role in initiation and regulation of meiosis, mitosis, and postmitotic functions in differentiated cells by phosphorylating a number of transcription factors. About 160 substrates have already been discovered for ERKs. Many of these substrates are localized in the nucleus, and seem to participate in the regulation of transcription upon stimulation. However, other substrates are found in the cytosol as well as in other cellular organelles, and those are responsible for processes such as translation, mitosis and apoptosis. Moreover, the MAPK/ERK cascade is also involved in the regulation of the endosomal dynamics, including lysosome processing and endosome cycling through the perinuclear recycling compartment (PNRC); as well as in the fragmentation of the Golgi apparatus during mitosis. The substrates include transcription factors (such as ATF2, BCL6, ELK1, ERF, FOS, HSF4 or SPZ1), cytoskeletal elements (such as CANX, CTTN, GJA1, MAP2, MAPT, PXN, SORBS3 or STMN1), regulators of apoptosis (such as BAD, BTG2, CASP9, DAPK1, IER3, MCL1 or PPARG), regulators of translation (such as EIF4EBP1) and a variety of other signaling-related molecules (like ARHGEF2, DEPTOR, FRS2 or GRB10). Protein kinases (such as RAF1, RPS6KA1/RSK1, RPS6KA3/RSK2, RPS6KA2/RSK3, RPS6KA6/RSK4, SYK, MKNK1/MNK1, MKNK2/MNK2, RPS6KA5/MSK1, RPS6KA4/MSK2, MAPKAPK3 or MAPKAPK5) and phosphatases (such as DUSP1, DUSP4, DUSP6 or DUSP16) are other substrates which enable the propagation the MAPK/ERK signal to additional cytosolic and nuclear targets, thereby extending the specificity of the cascade. The polypeptide is Mitogen-activated protein kinase 3 (Mapk3) (Rattus norvegicus (Rat)).